Consider the following 432-residue polypeptide: 3-phosphoshikimate 1-carboxyvinyltransferase (432 aa).

3 residues coordinate 3-phosphoshikimate: lysine 23, serine 24, and arginine 28. Residue lysine 23 coordinates phosphoenolpyruvate. Phosphoenolpyruvate-binding residues include glycine 95 and arginine 123. Positions 167, 169, 317, and 344 each coordinate 3-phosphoshikimate. Phosphoenolpyruvate is bound at residue glutamine 169. Residue aspartate 317 is the Proton acceptor of the active site. The phosphoenolpyruvate site is built by arginine 348 and arginine 390.

Belongs to the EPSP synthase family. Monomer.

It localises to the cytoplasm. The catalysed reaction is 3-phosphoshikimate + phosphoenolpyruvate = 5-O-(1-carboxyvinyl)-3-phosphoshikimate + phosphate. Its pathway is metabolic intermediate biosynthesis; chorismate biosynthesis; chorismate from D-erythrose 4-phosphate and phosphoenolpyruvate: step 6/7. In terms of biological role, catalyzes the transfer of the enolpyruvyl moiety of phosphoenolpyruvate (PEP) to the 5-hydroxyl of shikimate-3-phosphate (S3P) to produce enolpyruvyl shikimate-3-phosphate and inorganic phosphate. In Staphylococcus saprophyticus subsp. saprophyticus (strain ATCC 15305 / DSM 20229 / NCIMB 8711 / NCTC 7292 / S-41), this protein is 3-phosphoshikimate 1-carboxyvinyltransferase.